The sequence spans 600 residues: Calcium/calmodulin-dependent serine/threonine-protein kinase 1 (600 aa).

Residues 1 to 99 form a disordered region; it reads MGLCHGKSAA…GGFKRPFPPP (99 aa). Residues 24 to 56 are compositionally biased toward low complexity; sequence TRVAEAAAAPAKPASPAPSAAAAAAAPAKPGTP. Residues 74 to 85 show a composition bias toward polar residues; that stretch reads YKGSPANSSVAS. The Protein kinase domain maps to 147–409; that stretch reads YELGREVGRG…AAQALCHPWI (263 aa). ATP-binding positions include 153–161 and lysine 179; that span reads VGRGHFGYT. Aspartate 275 serves as the catalytic Proton acceptor.

It belongs to the protein kinase superfamily. Ser/Thr protein kinase family. Autophosphorylated. In terms of tissue distribution, highly expressed in roots in the zone of cell division. Expressed in leaf mesophyll cells and at lower levels in mature stems.

The enzyme catalyses L-seryl-[protein] + ATP = O-phospho-L-seryl-[protein] + ADP + H(+). It carries out the reaction L-threonyl-[protein] + ATP = O-phospho-L-threonyl-[protein] + ADP + H(+). With respect to regulation, activated by the binding of calmodulin-like protein 1 (CML1) in the presence of Ca(2+). In terms of biological role, possesses kinase activity in vitro. The protein is Calcium/calmodulin-dependent serine/threonine-protein kinase 1 (CAMK1) of Oryza sativa subsp. japonica (Rice).